The primary structure comprises 622 residues: Probable E3 ubiquitin-protein ligase DTX2 (622 aa).

2 consecutive WWE domains span residues 8 to 97 (SLVQ…AVRR) and 98 to 174 (HLFP…SVRR). Asymmetric dimethylarginine is present on residues arginine 213, arginine 215, and arginine 233. Lysine 249 carries the post-translational modification N6-acetyllysine. Disordered regions lie at residues 249–324 (KPSL…VPMQ) and 355–393 (APQP…EPEP). Position 256 is an omega-N-methylarginine (arginine 256). A compositionally biased stretch (polar residues) spans 274-285 (LGSQPLYRSSLS). Over residues 299-322 (SGAVSASLPSGPSSSPGSVPATVP) the composition is skewed to low complexity. Residue serine 360 is modified to Phosphoserine. Over residues 372-381 (GSVKRLRKMS) the composition is skewed to basic residues. The RING-type zinc-finger motif lies at 412 to 473 (CIICMEKLST…DGSLQCPSCK (62 aa)).

This sequence belongs to the Deltex family. As to quaternary structure, homodimer. May form a heterodimer with other members of the Deltex family. Interacts with NOTCH1.

It localises to the cytoplasm. It is found in the nucleus. The enzyme catalyses S-ubiquitinyl-[E2 ubiquitin-conjugating enzyme]-L-cysteine + [acceptor protein]-L-lysine = [E2 ubiquitin-conjugating enzyme]-L-cysteine + N(6)-ubiquitinyl-[acceptor protein]-L-lysine.. It participates in protein modification; protein ubiquitination. Functionally, regulator of Notch signaling, a signaling pathway involved in cell-cell communications that regulates a broad spectrum of cell-fate determinations. Probably acts both as a positive and negative regulator of Notch, depending on the developmental and cell context. Mediates the antineural activity of Notch, possibly by inhibiting the transcriptional activation mediated by MATCH1. Functions as a ubiquitin ligase protein in vitro, suggesting that it may regulate the Notch pathway via some ubiquitin ligase activity. The chain is Probable E3 ubiquitin-protein ligase DTX2 (DTX2) from Homo sapiens (Human).